We begin with the raw amino-acid sequence, 119 residues long: Large ribosomal subunit protein bL20 (119 aa).

It belongs to the bacterial ribosomal protein bL20 family.

Its function is as follows. Binds directly to 23S ribosomal RNA and is necessary for the in vitro assembly process of the 50S ribosomal subunit. It is not involved in the protein synthesizing functions of that subunit. The protein is Large ribosomal subunit protein bL20 of Verminephrobacter eiseniae (strain EF01-2).